Here is a 454-residue protein sequence, read N- to C-terminus: Probable multidrug resistance protein NorM (454 aa).

Helical transmembrane passes span 13–32 (QFVL…FAMS), 47–69 (LAGV…GILM), 90–112 (VVIQ…GFFA), 132–154 (QFLS…RGFI), 166–188 (ITLL…HFGF), 193–215 (GVGA…VMII), 244–266 (LGVP…TLMM), 286–308 (LLYM…EVGA), 317–339 (YGFI…LYFF), 359–381 (EFLI…QGAL), 388–410 (NVSL…YILA), and 420–442 (YWIG…LFQV).

Belongs to the multi antimicrobial extrusion (MATE) (TC 2.A.66.1) family.

It is found in the cell membrane. Multidrug efflux pump. The protein is Probable multidrug resistance protein NorM (norM) of Bacillus cereus (strain ATCC 10987 / NRS 248).